Reading from the N-terminus, the 211-residue chain is Ribonuclease T (211 aa).

One can recognise an Exonuclease domain in the interval 24 to 198 (VVVDVETGGF…YDAEKTAHLF (175 aa)). Residues Asp27, Glu29, His185, and Asp190 each contribute to the Mg(2+) site. His185 serves as the catalytic Proton donor/acceptor.

It belongs to the RNase T family. Homodimer. It depends on Mg(2+) as a cofactor.

Functionally, trims short 3' overhangs of a variety of RNA species, leaving a one or two nucleotide 3' overhang. Responsible for the end-turnover of tRNA: specifically removes the terminal AMP residue from uncharged tRNA (tRNA-C-C-A). Also appears to be involved in tRNA biosynthesis. This is Ribonuclease T from Xylella fastidiosa (strain Temecula1 / ATCC 700964).